The following is a 284-amino-acid chain: Ribosomal RNA small subunit methyltransferase A (284 aa).

Residues His-12, Leu-14, Gly-47, Glu-68, Asp-93, and Asn-118 each coordinate S-adenosyl-L-methionine.

The protein belongs to the class I-like SAM-binding methyltransferase superfamily. rRNA adenine N(6)-methyltransferase family. RsmA subfamily.

It is found in the cytoplasm. The catalysed reaction is adenosine(1518)/adenosine(1519) in 16S rRNA + 4 S-adenosyl-L-methionine = N(6)-dimethyladenosine(1518)/N(6)-dimethyladenosine(1519) in 16S rRNA + 4 S-adenosyl-L-homocysteine + 4 H(+). Specifically dimethylates two adjacent adenosines (A1518 and A1519) in the loop of a conserved hairpin near the 3'-end of 16S rRNA in the 30S particle. May play a critical role in biogenesis of 30S subunits. The protein is Ribosomal RNA small subunit methyltransferase A of Synechocystis sp. (strain ATCC 27184 / PCC 6803 / Kazusa).